The following is a 301-amino-acid chain: Homoserine O-acetyltransferase (301 aa).

Cys142 (acyl-thioester intermediate) is an active-site residue. Substrate contacts are provided by Lys163 and Ser192. His235 functions as the Proton acceptor in the catalytic mechanism. Glu237 is an active-site residue. Substrate is bound at residue Arg249.

The protein belongs to the MetA family.

It localises to the cytoplasm. The enzyme catalyses L-homoserine + acetyl-CoA = O-acetyl-L-homoserine + CoA. Its pathway is amino-acid biosynthesis; L-methionine biosynthesis via de novo pathway; O-acetyl-L-homoserine from L-homoserine: step 1/1. Its function is as follows. Transfers an acetyl group from acetyl-CoA to L-homoserine, forming acetyl-L-homoserine. This is Homoserine O-acetyltransferase from Clostridium acetobutylicum (strain ATCC 824 / DSM 792 / JCM 1419 / IAM 19013 / LMG 5710 / NBRC 13948 / NRRL B-527 / VKM B-1787 / 2291 / W).